The following is a 62-amino-acid chain: Photosystem II reaction center protein Z (62 aa).

The next 2 membrane-spanning stretches (helical) occupy residues 8-28 (LVLL…VVLA) and 41-61 (YTGA…NSLV).

The protein belongs to the PsbZ family. As to quaternary structure, PSII is composed of 1 copy each of membrane proteins PsbA, PsbB, PsbC, PsbD, PsbE, PsbF, PsbH, PsbI, PsbJ, PsbK, PsbL, PsbM, PsbT, PsbX, PsbY, PsbZ, Psb30/Ycf12, at least 3 peripheral proteins of the oxygen-evolving complex and a large number of cofactors. It forms dimeric complexes.

The protein resides in the plastid. Its subcellular location is the chloroplast thylakoid membrane. In terms of biological role, may control the interaction of photosystem II (PSII) cores with the light-harvesting antenna, regulates electron flow through the 2 photosystem reaction centers. PSII is a light-driven water plastoquinone oxidoreductase, using light energy to abstract electrons from H(2)O, generating a proton gradient subsequently used for ATP formation. The protein is Photosystem II reaction center protein Z of Pyropia yezoensis (Susabi-nori).